The sequence spans 399 residues: Protein HYM1 (399 aa).

Positions 363–382 (VSNNNASSSNVASITSPSSV) are enriched in low complexity. The segment at 363–399 (VSNNNASSSNVASITSPSSVMNNQSSILTHSTSPDSR) is disordered. Polar residues predominate over residues 383-399 (MNNQSSILTHSTSPDSR).

Belongs to the Mo25 family.

The sequence is that of Protein HYM1 (HYM1) from Saccharomyces cerevisiae (strain ATCC 204508 / S288c) (Baker's yeast).